Consider the following 154-residue polypeptide: Superoxide dismutase [Cu-Zn] (154 aa).

Cu cation-binding residues include histidine 47, histidine 49, and histidine 64. A disulfide bond links cysteine 58 and cysteine 147. Residues histidine 64, histidine 72, histidine 81, and aspartate 84 each coordinate Zn(2+). Residue histidine 121 participates in Cu cation binding. Residues 122-143 (GGTDDLGKGGNEESLKTGNAGP) form a disordered region. Residues 123-136 (GTDDLGKGGNEESL) show a composition bias toward basic and acidic residues. Residue arginine 144 participates in substrate binding.

The protein belongs to the Cu-Zn superoxide dismutase family. Homodimer. Cu cation serves as cofactor. The cofactor is Zn(2+).

The protein resides in the cytoplasm. It carries out the reaction 2 superoxide + 2 H(+) = H2O2 + O2. Functionally, destroys radicals which are normally produced within the cells and which are toxic to biological systems. The sequence is that of Superoxide dismutase [Cu-Zn] (SOD1) from Cordyceps militaris (Caterpillar fungus).